Consider the following 234-residue polypeptide: NAD-dependent protein deacylase (234 aa).

The Deacetylase sirtuin-type domain maps to 1-234 (MKNLVVLTGA…ELKQLLIPAP (234 aa)). 9–28 (GAGMSAESGISTFRDAGGLW) contacts NAD(+). 2 residues coordinate substrate: Tyr-53 and Arg-56. 86-89 (QNVD) is an NAD(+) binding site. His-104 (proton acceptor) is an active-site residue. Residue 175–177 (GTS) participates in NAD(+) binding.

Belongs to the sirtuin family. Class III subfamily.

The protein resides in the cytoplasm. It carries out the reaction N(6)-acetyl-L-lysyl-[protein] + NAD(+) + H2O = 2''-O-acetyl-ADP-D-ribose + nicotinamide + L-lysyl-[protein]. The enzyme catalyses N(6)-succinyl-L-lysyl-[protein] + NAD(+) + H2O = 2''-O-succinyl-ADP-D-ribose + nicotinamide + L-lysyl-[protein]. In terms of biological role, NAD-dependent lysine deacetylase and desuccinylase that specifically removes acetyl and succinyl groups on target proteins. Modulates the activities of several proteins which are inactive in their acylated form. This chain is NAD-dependent protein deacylase, found in Bacteroides thetaiotaomicron (strain ATCC 29148 / DSM 2079 / JCM 5827 / CCUG 10774 / NCTC 10582 / VPI-5482 / E50).